The following is a 515-amino-acid chain: Slowpoke-binding protein (515 aa).

Residues 1-31 (MFKFNKAAQQQRIDNRNSAVTGHDPFVRPPV) are disordered. A compositionally biased stretch (polar residues) spans 7–20 (AAQQQRIDNRNSAV). Serine 54 and serine 79 each carry phosphoserine. Residues 73–82 (SSNRSASSEQ) show a composition bias toward polar residues. A disordered region spans residues 73–94 (SSNRSASSEQDNSDLSEHSEKS). The interaction with Slo stretch occupies residues 191-203 (NWFLVTDASVRTD). Positions 483 to 503 (SLSEANSPCTPPSTPHDRRTG) are disordered.

Interacts specifically with Slo; which activates Slo activity. Interacts with 14-3-3-zeta when phosphorylated. Forms a heterotetrameric complex containing phosphorylated Slob, Slo and 14-3-3-zeta, which represses Slo activity due to the indirect interaction between Slo and 14-3-3-zeta. Phosphorylated. Phosphorylation of Ser-54 and Ser-79 is required for the interaction with 14-3-3-zeta but not with that of Slo. In terms of tissue distribution, expressed in head. In larval brain, it is expressed in the mushroom body. Also expressed in larval muscles.

The protein resides in the cytoplasm. Its function is as follows. Regulator of calcium-activated channel Slo. Increases or decreases the voltage sensitivity of Slo, depending on the absence or presence of 14-3-3-zeta in the complex, respectively. In Drosophila melanogaster (Fruit fly), this protein is Slowpoke-binding protein (Slob).